The primary structure comprises 136 residues: Glutamyl-tRNA(Gln) amidotransferase subunit C, mitochondrial (136 aa).

The transit peptide at 1–27 directs the protein to the mitochondrion; sequence MWARAVHLGLRAAARGRRGFTSKADPQ.

It belongs to the GatC family. In terms of assembly, subunit of the heterotrimeric GatCAB amidotransferase (AdT) complex, composed of A (QRSL1), B (GATB) and C (GATC) subunits.

It localises to the mitochondrion. It catalyses the reaction L-glutamyl-tRNA(Gln) + L-glutamine + ATP + H2O = L-glutaminyl-tRNA(Gln) + L-glutamate + ADP + phosphate + H(+). Its function is as follows. Allows the formation of correctly charged Gln-tRNA(Gln) through the transamidation of misacylated Glu-tRNA(Gln) in the mitochondria. The reaction takes place in the presence of glutamine and ATP through an activated gamma-phospho-Glu-tRNA(Gln). This Bos taurus (Bovine) protein is Glutamyl-tRNA(Gln) amidotransferase subunit C, mitochondrial.